The primary structure comprises 322 residues: 2-methylene-furan-3-one reductase (322 aa).

Residues Lys59, 174-175 (GV), 197-200 (STKK), Tyr215, Ile253, 264-266 (FVL), and 311-312 (RA) contribute to the NADP(+) site. Lys59 is a binding site for substrate.

This sequence belongs to the zinc-containing alcohol dehydrogenase family. Quinone oxidoreductase subfamily. As to quaternary structure, monomer.

It catalyses the reaction 4-hydroxy-2,5-dimethyl-furan-3(2H)-one + NADP(+) = 4-hydroxy-5-methyl-2-methylenefuran-3(2H)-one + NADPH + H(+). Enone oxidoreductase involved in the biosynthesis of 4-hydroxy-2,5-dimethyl-3(2H)-furanone (HDMF or furaneol), the key flavor compound in strawberries. The chain is 2-methylene-furan-3-one reductase (EO) from Fragaria vesca (Woodland strawberry).